Here is a 233-residue protein sequence, read N- to C-terminus: Uracil-DNA glycosylase (233 aa).

The active-site Proton acceptor is the aspartate 70.

The protein belongs to the uracil-DNA glycosylase (UDG) superfamily. UNG family.

It is found in the cytoplasm. The catalysed reaction is Hydrolyzes single-stranded DNA or mismatched double-stranded DNA and polynucleotides, releasing free uracil.. Excises uracil residues from the DNA which can arise as a result of misincorporation of dUMP residues by DNA polymerase or due to deamination of cytosine. The chain is Uracil-DNA glycosylase from Helicobacter pylori (strain P12).